We begin with the raw amino-acid sequence, 680 residues long: Methionine--tRNA ligase (680 aa).

The 'HIGH' region motif lies at 15 to 25 (PYANGPVHIGH). Cys-147, Cys-150, Cys-160, and Cys-163 together coordinate Zn(2+). Residues 332 to 336 (KISTS) carry the 'KMSKS' region motif. Thr-335 serves as a coordination point for ATP. In terms of domain architecture, tRNA-binding spans 579–680 (DFLKLDIRVG…AEVAPGSQVK (102 aa)).

Belongs to the class-I aminoacyl-tRNA synthetase family. MetG type 1 subfamily. As to quaternary structure, homodimer. The cofactor is Zn(2+).

The protein localises to the cytoplasm. The catalysed reaction is tRNA(Met) + L-methionine + ATP = L-methionyl-tRNA(Met) + AMP + diphosphate. Its function is as follows. Is required not only for elongation of protein synthesis but also for the initiation of all mRNA translation through initiator tRNA(fMet) aminoacylation. This Porphyromonas gingivalis (strain ATCC 33277 / DSM 20709 / CIP 103683 / JCM 12257 / NCTC 11834 / 2561) protein is Methionine--tRNA ligase.